Consider the following 360-residue polypeptide: Probable arginine kinase ZC434.8 (360 aa).

The 83-residue stretch at 10-92 folds into the Phosphagen kinase N-terminal domain; that stretch reads SIEEVYTKLQ…FNPVIEEYHN (83 aa). 65-69 is a substrate binding site; it reads GVGIY. The 238-residue stretch at 122-359 folds into the Phosphagen kinase C-terminal domain; that stretch reads FIVSTRIRCG…KKLIELEKAA (238 aa). ATP is bound by residues 125 to 129 and His-189; that span reads STRIR. A substrate-binding site is contributed by Glu-229. Arg-233 provides a ligand contact to ATP. Residue Cys-275 participates in substrate binding. Residues 284–288, 312–317, and Asp-327 each bind ATP; these read RASVH and RGIHGE. Residue Glu-317 participates in substrate binding.

The protein belongs to the ATP:guanido phosphotransferase family.

It carries out the reaction L-arginine + ATP = N(omega)-phospho-L-arginine + ADP + H(+). The chain is Probable arginine kinase ZC434.8 from Caenorhabditis elegans.